Here is a 157-residue protein sequence, read N- to C-terminus: 2-C-methyl-D-erythritol 2,4-cyclodiphosphate synthase (157 aa).

A divalent metal cation is bound by residues Asp-9 and His-11. 4-CDP-2-C-methyl-D-erythritol 2-phosphate is bound by residues 9 to 11 (DVH) and 35 to 36 (HS). Residue His-43 participates in a divalent metal cation binding. Residues 57-59 (DIG), 62-66 (FPDTD), 101-107 (AEKPKMA), 133-136 (TTTE), Phe-140, and Arg-143 contribute to the 4-CDP-2-C-methyl-D-erythritol 2-phosphate site.

The protein belongs to the IspF family. In terms of assembly, homotrimer. The cofactor is a divalent metal cation.

The catalysed reaction is 4-CDP-2-C-methyl-D-erythritol 2-phosphate = 2-C-methyl-D-erythritol 2,4-cyclic diphosphate + CMP. Its pathway is isoprenoid biosynthesis; isopentenyl diphosphate biosynthesis via DXP pathway; isopentenyl diphosphate from 1-deoxy-D-xylulose 5-phosphate: step 4/6. Its function is as follows. Involved in the biosynthesis of isopentenyl diphosphate (IPP) and dimethylallyl diphosphate (DMAPP), two major building blocks of isoprenoid compounds. Catalyzes the conversion of 4-diphosphocytidyl-2-C-methyl-D-erythritol 2-phosphate (CDP-ME2P) to 2-C-methyl-D-erythritol 2,4-cyclodiphosphate (ME-CPP) with a corresponding release of cytidine 5-monophosphate (CMP). The protein is 2-C-methyl-D-erythritol 2,4-cyclodiphosphate synthase of Listeria monocytogenes serovar 1/2a (strain ATCC BAA-679 / EGD-e).